A 436-amino-acid polypeptide reads, in one-letter code: Arginine-hydroxylase NDUFAF5, mitochondrial (436 aa).

The N-terminal 25 residues, 1-25, are a transit peptide targeting the mitochondrion; it reads MLRTTFRKGFNLKCFSKDWNQTRQY. Residues 365–436 form a disordered region; the sequence is VTLSQQQQQQ…DEINKNKDDK (72 aa). Low complexity predominate over residues 369-380; the sequence is QQQQQQGIEPQQ. Composition is skewed to basic and acidic residues over residues 391–411 and 421–436; these read PKTD…HFEK and QNKE…KDDK.

Belongs to the methyltransferase superfamily.

Its subcellular location is the mitochondrion. In terms of biological role, involved in the assembly of mitochondrial NADH:ubiquinone oxidoreductase complex (complex I, MT-ND1) at early stages. Probably acts as an arginine hydroxylase. May also have methyltransferase activity. The chain is Arginine-hydroxylase NDUFAF5, mitochondrial from Dictyostelium discoideum (Social amoeba).